The primary structure comprises 875 residues: Protein translocase subunit SecA (875 aa).

ATP-binding positions include Q87, 105 to 109 (GEGKT), and D512. C860, C862, C871, and H872 together coordinate Zn(2+).

Belongs to the SecA family. Monomer and homodimer. Part of the essential Sec protein translocation apparatus which comprises SecA, SecYEG and auxiliary proteins SecDF-YajC and YidC. It depends on Zn(2+) as a cofactor.

The protein resides in the cell inner membrane. Its subcellular location is the cytoplasm. The enzyme catalyses ATP + H2O + cellular proteinSide 1 = ADP + phosphate + cellular proteinSide 2.. In terms of biological role, part of the Sec protein translocase complex. Interacts with the SecYEG preprotein conducting channel. Has a central role in coupling the hydrolysis of ATP to the transfer of proteins into and across the cell membrane, serving both as a receptor for the preprotein-SecB complex and as an ATP-driven molecular motor driving the stepwise translocation of polypeptide chains across the membrane. This chain is Protein translocase subunit SecA, found in Buchnera aphidicola subsp. Acyrthosiphon pisum (strain APS) (Acyrthosiphon pisum symbiotic bacterium).